Here is a 151-residue protein sequence, read N- to C-terminus: S-protein homolog 27 (151 aa).

N-linked (GlcNAc...) asparagine glycans are attached at residues N91 and N123.

It belongs to the plant self-incompatibility (S1) protein family.

The protein localises to the secreted. The protein is S-protein homolog 27 of Arabidopsis thaliana (Mouse-ear cress).